Here is a 180-residue protein sequence, read N- to C-terminus: MASAVVNQSEAAAVRAPSKPVKTYSKENEQLVKQSWEILKKDAQRNGINFFRKVFEIAPGAKAMYSFLRDSTIPFEENPKVKNHARYVFMMTGDAAVQLGEKGAYQVLESKLQKLAATHVNAGVTDDQFEIVKEAILYAIEMGVPDLWSPELKSAWGDAYDMLAEQVKAEMHAQRSAATS.

A Globin domain is found at 23-172 (TYSKENEQLV…LAEQVKAEMH (150 aa)). Positions 56-60 (EIAPG) match the Homodimerization motif. Heme b-binding residues include Ser-66, Lys-80, His-84, Lys-114, Thr-118, and His-119. Residues 126–138 (DDQFEIVKEAILY) carry the Homodimerization motif.

The protein belongs to the plant globin family. As to quaternary structure, homodimer. Requires heme b as cofactor.

It is found in the cytoplasm. The protein localises to the nucleus. It catalyses the reaction Fe(III)-heme b-[protein] + nitric oxide + H2O = Fe(II)-heme b-[protein] + nitrite + 2 H(+). Phytoglobin that reduces nitrite to nitric oxide (NO) under anoxic conditions (e.g. during flooding or in waterlogged soil). May not function as an oxygen storage or transport protein. Has an unusually high affinity for O(2) through an hexacoordinate heme iron because of a very low dissociation constant. This Physcomitrium patens (Spreading-leaved earth moss) protein is Anaerobic nitrite reductase GLB0.